The primary structure comprises 613 residues: MAEGVFQGAIGIDLGTTYSCVATYESSVEIIANEQGNRVTPSFVAFTPEERLIGDAAKNQAALNPRNTVFDAKRLIGRRFDDESVQKDMKTWPFKVIDVDGNPVIEVQYLEETKTFSPQEISAMVLTKMKEIAEAKIGKKVEKAVITVPAYFNDAQRQATKDAGAISGLNVLRIINEPTAAAIAYGLGAGKSEKERHVLIFDLGGGTFDVSLLHIAGGVYTVKSTSGNTHLGGQDFDTNLLEHFKAEFKKKTGLDISDDARALRRLRTAAERAKRTLSSVTQTTVEVDSLFDGEDFESSLTRARFEDLNAALFKSTLEPVEQVLKDAKISKSQIDEVVLVGGSTRIPKVQKLLSDFFDGKQLEKSINPDEAVAYGAAVQGAILTGQSTSDETKDLLLLDVAPLSLGVGMQGDMFGIVVPRNTTVPTIKRRTFTTCADNQTTVQFPVYQGERVNCKENTLLGEFDLKNIPMMPAGEPVLEAIFEVDANGILKVTAVEKSTGKSSNITISNAVGRLSSEEIEKMVNQAEEFKAADEAFAKKHEARQRLESYVASIEQTVTDPVLSSKLKRGSKSKIEAALSDALAALQIEDPSADELRKAEVGLKRVVTKAMSSR.

Residue Ala-2 is modified to N-acetylalanine. The interval 2–391 is nucleotide binding domain (NBD); the sequence is AEGVFQGAIG…ILTGQSTSDE (390 aa). 16-18 provides a ligand contact to ATP; the sequence is TTY. Position 47 is a phosphothreonine (Thr-47). ATP is bound by residues Lys-73, 205 to 207, 271 to 278, and Gly-342; these read GGT and ERAKRTLS. Positions 392–402 are inter-domain linker; it reads TKDLLLLDVAP. The segment at 403–613 is substrate binding domain (SBD); that stretch reads LSLGVGMQGD…RVVTKAMSSR (211 aa). The short motif at 428–430 is the Contributes to ribosome binding element; sequence KRR. Thr-431 carries the post-translational modification Phosphothreonine. The lid domain (SBDalpha) stretch occupies residues 516 to 612; the sequence is SEEIEKMVNQ…KRVVTKAMSS (97 aa). The short motif at 574-582 is the Nuclear export signal element; the sequence is IEAALSDAL. Residues 601–613 form a required for interaction with ribosomes region; that stretch reads GLKRVVTKAMSSR.

Belongs to the heat shock protein 70 family. Ssb-type Hsp70 subfamily. As to quaternary structure, binds to ribosomes. Binds close to the ribosomal tunnel exit via contacts with both ribosomal proteins RPL35, RPL39 and RPL19, and rRNA. Directly interacts with nascent polypeptides. This interaction is dependent on the ribosome-associated complex (RAC). Interacts with SSE1. Interacts with FES1. Interacts with NAP1.

The protein localises to the cytoplasm. The catalysed reaction is ATP + H2O = ADP + phosphate + H(+). Its function is as follows. Ribosome-bound, Hsp70-type chaperone that assists in the cotranslational folding of newly synthesized proteins in the cytosol. Stimulates folding by interacting with nascent chains, binding to short, largely hydrophobic sequences exposed by unfolded proteins, thereby stabilizing longer, more slowly translated, and aggregation-prone nascent polypeptides and domains that cannot fold stably until fully synthesized. The Hsp70-protein substrate interaction depends on ATP-binding and on allosteric regulation between the NBD and the SBD. The ATP-bound state is characterized by a fast exchange rate of substrate (low affinity state), while in the ADP-bound state exchange is much slower (high affinity state). During the Hsp70 cycle, the chaperone switches between the ATP-bound state (open conformation) and the ADP-bound state (closed conformation) by major conformational rearrangements involving mainly the lid domain. Ssb cooperates with a specific Hsp40/Hsp70 co-chaperone termed the ribosome-associated complex (RAC), which stimulates the ATPase activity of the ribosome-associated pool of Ssbs and switches it to the high affinity substrate binding state. Hsp110 chaperone SSE1 and FES1 act as nucleotide exchange factors that cause substrate release. In Saccharomyces cerevisiae (strain ATCC 204508 / S288c) (Baker's yeast), this protein is Ribosome-associated molecular chaperone SSB1.